The sequence spans 88 residues: Small ribosomal subunit protein uS15 (88 aa).

The protein belongs to the universal ribosomal protein uS15 family. Part of the 30S ribosomal subunit. Forms a bridge to the 50S subunit in the 70S ribosome, contacting the 23S rRNA.

Its function is as follows. One of the primary rRNA binding proteins, it binds directly to 16S rRNA where it helps nucleate assembly of the platform of the 30S subunit by binding and bridging several RNA helices of the 16S rRNA. In terms of biological role, forms an intersubunit bridge (bridge B4) with the 23S rRNA of the 50S subunit in the ribosome. In Caldanaerobacter subterraneus subsp. tengcongensis (strain DSM 15242 / JCM 11007 / NBRC 100824 / MB4) (Thermoanaerobacter tengcongensis), this protein is Small ribosomal subunit protein uS15.